The primary structure comprises 109 residues: Encapsulin nanocompartment cargo protein EncD (109 aa).

Fe cation is bound at residue E47. A disordered region spans residues 61 to 94 (AGGRGAAAPTPAREAPAEAPRLARGSADELHEAA). Low complexity predominate over residues 66-85 (AAAPTPAREAPAEAPRLARG). Positions 100 to 106 (LTVGSLR) are probable targeting peptide.

Its subcellular location is the encapsulin nanocompartment. Its function is as follows. Cargo protein of a type 1 encapsulin nanocompartment. May help nucleate Fe atoms in the interior of the encapsulin nanocompartment. Present in about 47 copies/encapsulin nanocompartment. The protein is Encapsulin nanocompartment cargo protein EncD of Myxococcus xanthus (strain DK1622).